Consider the following 936-residue polypeptide: Phosphoenolpyruvate carboxylase (936 aa).

A disordered region spans residues 1–20; that stretch reads MSSLNLSAGPEPVSERPDDA. Residues H164 and K598 contribute to the active site.

It belongs to the PEPCase type 1 family. The cofactor is Mg(2+).

It carries out the reaction oxaloacetate + phosphate = phosphoenolpyruvate + hydrogencarbonate. Functionally, forms oxaloacetate, a four-carbon dicarboxylic acid source for the tricarboxylic acid cycle. The chain is Phosphoenolpyruvate carboxylase (ppc) from Rhodopseudomonas palustris (strain ATCC BAA-98 / CGA009).